Here is a 156-residue protein sequence, read N- to C-terminus: RNA polymerase sigma factor SigS (156 aa).

Residues 29 to 44 (EYYQLLLIKMWQLSQI) carry the Polymerase core binding motif. A DNA-binding region (H-T-H motif) is located at residues 126–145 (QFEIAEIMSLSLSTIKLIKT).

It belongs to the sigma-70 factor family.

Sigma factors are initiation factors that promote the attachment of RNA polymerase to specific initiation sites and are then released. Sigma-S contributes to the protection against external stress, thus playing a role in cellular fitness and survival. The chain is RNA polymerase sigma factor SigS (sigS) from Staphylococcus aureus (strain bovine RF122 / ET3-1).